Reading from the N-terminus, the 273-residue chain is Alkaline ceramidase 1 (273 aa).

Residues Met1–Glu36 lie on the Lumenal side of the membrane. Asp22, Trp23, Glu25, Asn27, and Glu36 together coordinate Ca(2+). Residues Phe37–Met57 form a helical membrane-spanning segment. The Cytoplasmic portion of the chain corresponds to His58–Ser72. Transmembrane regions (helical) follow at residues Val73 to Gly93 and Gln94 to Pro114. His86 provides a ligand contact to Zn(2+). The Cytoplasmic segment spans residues Arg115 to Arg126. A helical transmembrane segment spans residues Phe127–Lys147. Over Pro148–Thr149 the chain is Lumenal. Residues Val150 to Arg167 form a helical membrane-spanning segment. Residues Thr168 to Asp177 lie on the Cytoplasmic side of the membrane. Residues Leu178 to Ser198 traverse the membrane as a helical segment. Residues Asp199–His215 lie on the Lumenal side of the membrane. 2 residues coordinate Zn(2+): His215 and His219. Residues Ser216–Val236 form a helical membrane-spanning segment. Topologically, residues Asp237–Cys273 are cytoplasmic.

This sequence belongs to the alkaline ceramidase family. Zn(2+) serves as cofactor. As to expression, highly expressed in skin. Weakly or not expressed in other tissues. Expressed by granular layer of interfollicular epidermis, sebaceous glands and infundibulum.

It is found in the endoplasmic reticulum membrane. The catalysed reaction is an N-acylsphing-4-enine + H2O = sphing-4-enine + a fatty acid. The enzyme catalyses N-tetracosanoyl-sphing-4-enine + H2O = tetracosanoate + sphing-4-enine. It catalyses the reaction an N-acylsphinganine + H2O = sphinganine + a fatty acid. It carries out the reaction N-(9Z-octadecenoyl)-sphing-4-enine + H2O = sphing-4-enine + (9Z)-octadecenoate. The catalysed reaction is N-(15Z-tetracosenoyl)-sphing-4-enine + H2O = (15Z)-tetracosenoate + sphing-4-enine. It functions in the pathway lipid metabolism; sphingolipid metabolism. With respect to regulation, inhibited by sphingosine. Inhibited by Mn(2+), Zn(2+), and Cu(2+) in a dose-dependent manner. Slightly activated by Ca(2+) in a dose-dependent manner. Functionally, endoplasmic reticulum ceramidase that catalyzes the hydrolysis of ceramides into sphingosine and free fatty acids at alkaline pH. Ceramides, sphingosine, and its phosphorylated form sphingosine-1-phosphate are bioactive lipids that mediate cellular signaling pathways regulating several biological processes including cell proliferation, apoptosis and differentiation. Exhibits a strong substrate specificity towards the natural stereoisomer of ceramides with D-erythro-sphingosine as a backbone and has a higher activity towards very long-chain unsaturated fatty acids like the C24:1-ceramide. May also hydrolyze dihydroceramides to produce dihydrosphingosine. ACER1 is a skin-specific ceramidase that regulates the levels of ceramides, sphingosine and sphingosine-1-phosphate in the epidermis, mediates the calcium-induced differentiation of epidermal keratinocytes and more generally plays an important role in skin homeostasis. This chain is Alkaline ceramidase 1, found in Mus musculus (Mouse).